Here is a 228-residue protein sequence, read N- to C-terminus: CMRF-35-like molecule 4 (228 aa).

The N-terminal stretch at 1–24 is a signal peptide; that stretch reads MIPRVIRLWLPSALFLSQVPGCVP. The 102-residue stretch at 25–126 folds into the Ig-like V-type domain; the sequence is LHGPSTITGA…FDGSLGFDKY (102 aa). At 25 to 187 the chain is on the extracellular side; that stretch reads LHGPSTITGA…QPRSLRSSLY (163 aa). An intrachain disulfide couples cysteine 43 to cysteine 110. The N-linked (GlcNAc...) asparagine glycan is linked to asparagine 90. The interval 139 to 174 is disordered; the sequence is PVTGSSLESGRDILESPTSSVGHTHPSVTTDDTIPA. A compositionally biased stretch (polar residues) spans 154-170; that stretch reads SPTSSVGHTHPSVTTDD. A helical transmembrane segment spans residues 188-208; sequence FWVLVSLKLFLFLSMLGAVLW. Residues 209–228 lie on the Cytoplasmic side of the membrane; sequence VNRPQRCSGGSSSRPCYENQ.

Belongs to the CD300 family. Interacts with TYROBP, HCST and FcR gamma. Present on the surface of mast cells, dendritic cells, peritoneal macrophages and a subset of B-cells (at protein level).

The protein resides in the cell membrane. Functionally, acts as an activating receptor in mast cells and macrophages. The protein is CMRF-35-like molecule 4 of Mus musculus (Mouse).